The sequence spans 89 residues: Small ribosomal subunit protein bS20 (89 aa).

The disordered stretch occupies residues 1 to 22 (MANTASARKRIRQNERRRERNV). A compositionally biased stretch (basic and acidic residues) spans 12–22 (RQNERRRERNV).

The protein belongs to the bacterial ribosomal protein bS20 family.

In terms of biological role, binds directly to 16S ribosomal RNA. In Gluconobacter oxydans (strain 621H) (Gluconobacter suboxydans), this protein is Small ribosomal subunit protein bS20.